The primary structure comprises 213 residues: ATP-dependent dethiobiotin synthetase BioD (213 aa).

Glu-12–Tyr-17 contacts ATP. A Mg(2+)-binding site is contributed by Thr-16. Lys-37 is an active-site residue. ATP-binding positions include Asp-46, Glu-107–Gly-110, and Asn-167–Asn-168. Mg(2+) is bound by residues Asp-46 and Glu-107.

Belongs to the dethiobiotin synthetase family. As to quaternary structure, homodimer. Requires Mg(2+) as cofactor.

It is found in the cytoplasm. The enzyme catalyses (7R,8S)-7,8-diammoniononanoate + CO2 + ATP = (4R,5S)-dethiobiotin + ADP + phosphate + 3 H(+). It participates in cofactor biosynthesis; biotin biosynthesis; biotin from 7,8-diaminononanoate: step 1/2. Its function is as follows. Catalyzes a mechanistically unusual reaction, the ATP-dependent insertion of CO2 between the N7 and N8 nitrogen atoms of 7,8-diaminopelargonic acid (DAPA, also called 7,8-diammoniononanoate) to form a ureido ring. In Akkermansia muciniphila (strain ATCC BAA-835 / DSM 22959 / JCM 33894 / BCRC 81048 / CCUG 64013 / CIP 107961 / Muc), this protein is ATP-dependent dethiobiotin synthetase BioD.